Reading from the N-terminus, the 389-residue chain is Chorismate synthase (389 aa).

NADP(+) is bound by residues Arg-41 and Arg-47. Residues 129-131 (RSS), 247-248 (NA), Gly-291, 306-310 (KPIST), and Arg-332 contribute to the FMN site.

The protein belongs to the chorismate synthase family. As to quaternary structure, homotetramer. It depends on FMNH2 as a cofactor.

The enzyme catalyses 5-O-(1-carboxyvinyl)-3-phosphoshikimate = chorismate + phosphate. Its pathway is metabolic intermediate biosynthesis; chorismate biosynthesis; chorismate from D-erythrose 4-phosphate and phosphoenolpyruvate: step 7/7. In terms of biological role, catalyzes the anti-1,4-elimination of the C-3 phosphate and the C-6 proR hydrogen from 5-enolpyruvylshikimate-3-phosphate (EPSP) to yield chorismate, which is the branch point compound that serves as the starting substrate for the three terminal pathways of aromatic amino acid biosynthesis. This reaction introduces a second double bond into the aromatic ring system. The sequence is that of Chorismate synthase from Rubrobacter xylanophilus (strain DSM 9941 / JCM 11954 / NBRC 16129 / PRD-1).